The following is a 754-amino-acid chain: ATP-dependent zinc metalloprotease FtsH (754 aa).

Over 1-9 the chain is Cytoplasmic; that stretch reads MKQRMKKPS. A helical membrane pass occupies residues 10 to 30; the sequence is LGTFILILILIGILAYVLWQF. Topologically, residues 31–186 are extracellular; that stretch reads LSPKLGYKSL…FDRPRGNFLS (156 aa). The chain crosses the membrane as a helical span at residues 187–207; it reads SFIVPYIPFLLISLFGFWLFF. Residues 208–754 lie on the Cytoplasmic side of the membrane; that stretch reads RLSQNSQAGG…ESKIDSSKEQ (547 aa). Residue 277–284 coordinates ATP; that stretch reads GPPGTGKT. Histidine 499 is a binding site for Zn(2+). Glutamate 500 is an active-site residue. Positions 503 and 577 each coordinate Zn(2+). The segment at 713-754 is disordered; that stretch reads QEKSYENEDQNQNSLEAINYNIDDQDDDKNDSESKIDSSKEQ. Residues 743 to 754 are compositionally biased toward basic and acidic residues; it reads DSESKIDSSKEQ.

In the central section; belongs to the AAA ATPase family. This sequence in the C-terminal section; belongs to the peptidase M41 family. As to quaternary structure, homohexamer. The cofactor is Zn(2+).

Its subcellular location is the cell membrane. Functionally, acts as a processive, ATP-dependent zinc metallopeptidase for both cytoplasmic and membrane proteins. Plays a role in the quality control of integral membrane proteins. This chain is ATP-dependent zinc metalloprotease FtsH, found in Mesomycoplasma conjunctivae (strain ATCC 25834 / NCTC 10147 / HRC/581) (Mycoplasma conjunctivae).